The primary structure comprises 784 residues: Ribosome biogenesis protein BOP1 homolog (784 aa).

Positions 1–11 (MTKKLALKRKG) are enriched in basic residues. The interval 1–159 (MTKKLALKRK…DSDTSDEEDI (159 aa)) is disordered. Acidic residues-rich tracts occupy residues 27-36 (SENEEEEEDL), 45-54 (EDSTDDEGID), 62-73 (SEELQFESDEEG), and 84-111 (AEED…EDEE). Residues 112–123 (KDSKSKQADDKP) show a composition bias toward basic and acidic residues. Residues 124–133 (SSSGAASKKA) show a composition bias toward low complexity. The span at 138-148 (LSKRDTSKPEY) shows a compositional bias: basic and acidic residues. Residues 149-158 (QDSDTSDEED) show a composition bias toward acidic residues. WD repeat units lie at residues 445–486 (GHTD…RTIE), 488–526 (DEVV…KVLV), 570–612 (THFK…SQIP), 615–653 (KSKG…LVKK), 656–695 (TNSK…KPYQ), 699–738 (LHRN…DLLQ), and 754–784 (RDEF…RLYT).

Belongs to the WD repeat BOP1/ERB1 family.

The protein localises to the nucleus. The protein resides in the nucleolus. Its subcellular location is the nucleoplasm. In terms of biological role, required for maturation of ribosomal RNAs and formation of the large ribosomal subunit. This Drosophila yakuba (Fruit fly) protein is Ribosome biogenesis protein BOP1 homolog.